The sequence spans 663 residues: Alpha-amylase MalA (663 aa).

Disordered regions lie at residues 1–28 (MHHPGPPRFVATGDEVELAPRDPDPTAT) and 80–135 (GTLE…LTLR). Over residues 92 to 111 (RSGGHSGGVSGGRSGPGRSG) the composition is skewed to gly residues. Asp411 acts as the Nucleophile in catalysis. Glu440 serves as the catalytic Proton donor.

Belongs to the glycosyl hydrolase 13 family.

The protein resides in the cytoplasm. The catalysed reaction is Endohydrolysis of (1-&gt;4)-alpha-D-glucosidic linkages in polysaccharides containing three or more (1-&gt;4)-alpha-linked D-glucose units.. It functions in the pathway glycan degradation; starch degradation. Stable and active over a broad range of NaCl concentrations (0.5 to 4.2 M NaCl), with maximal activity at 2.6 M NaCl. 83% and 94% of the maximum activity at 0.6 and 4.2 M NaCl, respectively. Active and stable also in KCl. Alpha-amylase that cleaves starch into oligosaccharides, the first step in starch degradation. Endo-acting enzyme which prefers a linear polysaccharide to branched polysaccharides hydrolyzing alpha-1,4 glucosidic bonds efficiently. Also has transglycosylation activity, but does not act on alpha-1,6 bonds. Higher activities of 100%, 79% and 67.8% against amylose, soluble starch and amylopectin, respectively. Lower activity of 22% against glycogen and faint or no activity against alpha-, beta- and gamma-cyclodextrin. This is Alpha-amylase MalA from Haloarcula japonica (strain ATCC 49778 / DSM 6131 / JCM 7785 / NBRC 101032 / NCIMB 13157 / TR-1).